Consider the following 457-residue polypeptide: MGSDRWKNIRGTPQMEDSVQEKSQRKGCGYILCTVLLSVAVLLAVTVTGAVLFMNQYHAPSTEPPPVITTNMEDPNALVTIERADSSHINIFIDPNCPDTFPRLEGLQSTMLSALADHDSEQKMAGGKERALLTSLSDQVAQMVSQVARQRADWENVKKVQNGLGTEIGALKNEQGRLIKLLSEGQSHVAQLGSSVSEVLETVQRELGSGRPRLKADLQRAPSRSARPRGCANGSKPRDCYDIYMSGQQEDGVYSVFPIHYPSGFQVFCDMTTDGGGWTVFQRREDGSVNFFQGWEQYRDGFGKLTGEHWLGLQGIHLLTMQAHYQLRIDLEDFDNATAYAVYNTFGVGLFSVNPEEDGYPITVSDYTGTAGDSLGKHSGMKFTTKDLDNDHSENNCATFYHGAWWYRNCHTSNLNGQYLRGHHASYADGIEWSSWTGWQYSLKFTEMKIRPQREEN.

The disordered stretch occupies residues 1–21 (MGSDRWKNIRGTPQMEDSVQE). At 1–33 (MGSDRWKNIRGTPQMEDSVQEKSQRKGCGYILC) the chain is on the cytoplasmic side. A helical; Signal-anchor for type II membrane protein transmembrane segment spans residues 34–54 (TVLLSVAVLLAVTVTGAVLFM). Over 55-457 (NQYHAPSTEP…MKIRPQREEN (403 aa)) the chain is Extracellular. In terms of domain architecture, Fibrinogen C-terminal spans 231–454 (CANGSKPRDC…FTEMKIRPQR (224 aa)). A glycan (N-linked (GlcNAc...) asparagine) is linked at N233. C240 and C269 are oxidised to a cystine. An N-linked (GlcNAc...) asparagine glycan is attached at N336. Ca(2+)-binding residues include D389 and D391. C397 and C410 form a disulfide bridge.

Homotetramer; disulfide-linked.

Its subcellular location is the membrane. Its function is as follows. Acetyl group-binding receptor which shows a calcium-dependent binding to acetylated structures such as chitin, some N-acetylated carbohydrates, and amino acids. The sequence is that of Fibrinogen C domain-containing protein 1-B (fibcd1-b) from Xenopus laevis (African clawed frog).